A 554-amino-acid chain; its full sequence is Heterochromatin protein 1-binding protein 3 (554 aa).

Ala-2 carries the post-translational modification N-acetylalanine. At Ser-6 the chain carries Phosphoserine. 2 disordered regions span residues 30-136 and 142-161; these read LGEK…KTIP and SASQ…SPRP. Residue Thr-51 is modified to Phosphothreonine. The segment covering 60–71 has biased composition (acidic residues); it reads GEEEKPEPDGSS. Residue Lys-64 forms a Glycyl lysine isopeptide (Lys-Gly) (interchain with G-Cter in SUMO2) linkage. Phosphothreonine is present on residues Glu-72 and Thr-85. The span at 72 to 93 shows a compositional bias: polar residues; sequence EESISTVEEQENETPPATSSEA. Positions 94 to 129 are enriched in basic and acidic residues; that stretch reads EQPKGEPESGEKEENNNKSAEEPKKDEKDQSKEKEK. A Glycyl lysine isopeptide (Lys-Gly) (interchain with G-Cter in SUMO2) cross-link involves residue Lys-97. Polar residues predominate over residues 142–156; that stretch reads SASQLARAQRQTPMA. A phosphoserine mark is found at Ser-144, Ser-157, and Ser-158. Residues 159 to 234 enclose the H15 1 domain; the sequence is PRPKMDAILT…GASGSFVVVQ (76 aa). Lys-192 carries the N6-acetyllysine modification. Residues 229–254 are disordered; it reads SFVVVQKSKPPQKSKNRKKGSALDPE. Residues 238 to 248 are compositionally biased toward basic residues; the sequence is PPQKSKNRKKG. Position 249 is a phosphoserine (Ser-249). The PxVxL motif signature appears at 255 to 259; that stretch reads PQVKL. H15 domains lie at 255–330 and 337–413; these read PQVK…QLKK and LGGS…QLSF. A Glycyl lysine isopeptide (Lys-Gly) (interchain with G-Cter in SUMO2) cross-link involves residue Lys-258. The tract at residues 420 to 554 is disordered; the sequence is GVLFPKKESG…AMKKSFKTKK (135 aa). Positions 430 to 451 are enriched in acidic residues; it reads GSDDEDEDDDDDESSEDSEDEE. 3 positions are modified to phosphoserine: Ser-443, Ser-444, and Ser-447. Residues 464-475 are compositionally biased toward polar residues; that stretch reads AKSQGKTASMKQ. 2 stretches are compositionally biased toward basic residues: residues 490–511 and 544–554; these read GKVR…RKAR and SAMKKSFKTKK.

Interacts (via PxVxL motif) with CBX5 (via Trp-174).

The protein localises to the nucleus. Its subcellular location is the chromosome. In terms of biological role, component of heterochromatin that maintains heterochromatin integrity during G1/S progression and regulates the duration of G1 phase to critically influence cell proliferative capacity. May play a role in hypoxia-induced oncogenesis. The sequence is that of Heterochromatin protein 1-binding protein 3 (Hp1bp3) from Mus musculus (Mouse).